A 267-amino-acid chain; its full sequence is MTKITKIEVQKNNKERFNLFLDEVFEMGIDIDTLVRFNLKKGQILEPSDMENIQKYEHYRLGINMAIQYLSYKKRTEKEVRQHLQQNEISDIAIQQVIDYCYRESYINHEDYAESLKNTMINTTDKGPEIFRQKLYQVGIEPNIINTYVPIYEEEQSFEAVIEVAKKIMKTKKGPEIKIRQKVLQSLIQKGYSMDVVQQAIAELNFEQDENILDDLLQKDLEKVYTKQRRKYDGQQLVMKTIESLMRKGYKYDKIKSKLEESGILDE.

This sequence belongs to the RecX family.

It is found in the cytoplasm. Functionally, modulates RecA activity. This Staphylococcus haemolyticus (strain JCSC1435) protein is Regulatory protein RecX.